We begin with the raw amino-acid sequence, 139 residues long: Oocyte zinc finger protein XlCOF14 (139 aa).

5 C2H2-type zinc fingers span residues 6–28, 33–55, 61–83, 89–111, and 117–139; these read FICSECGKSFMDKRYLKIHSNVH, FPCTECGKSFAAKQNLKRHQKIH, HKCTECGKQFLQKNKLDRHHLSH, FSCFECGEQFTWKHLLQYHQLSH, and FVCSECGKGYKTKASLALHCHIH.

It belongs to the krueppel C2H2-type zinc-finger protein family.

The protein resides in the nucleus. Functionally, may be involved in transcriptional regulation. This is Oocyte zinc finger protein XlCOF14 from Xenopus laevis (African clawed frog).